Here is a 142-residue protein sequence, read N- to C-terminus: Large ribosomal subunit protein uL13 (142 aa).

Belongs to the universal ribosomal protein uL13 family. Part of the 50S ribosomal subunit.

Its function is as follows. This protein is one of the early assembly proteins of the 50S ribosomal subunit, although it is not seen to bind rRNA by itself. It is important during the early stages of 50S assembly. The chain is Large ribosomal subunit protein uL13 from Haemophilus influenzae (strain 86-028NP).